The following is a 78-amino-acid chain: Sec-independent protein translocase protein TatA (78 aa).

A helical transmembrane segment spans residues 1–21; it reads MGSLSIWHWIVVIGVVLLLFG. Over residues 42–60 the composition is skewed to basic and acidic residues; that stretch reads GLQDDEKTAEKPEPVKSID. The interval 42–78 is disordered; it reads GLQDDEKTAEKPEPVKSIDHTAPPAAAPRTDVGSKVV.

The protein belongs to the TatA/E family. In terms of assembly, the Tat system comprises two distinct complexes: a TatABC complex, containing multiple copies of TatA, TatB and TatC subunits, and a separate TatA complex, containing only TatA subunits. Substrates initially bind to the TatABC complex, which probably triggers association of the separate TatA complex to form the active translocon.

Its subcellular location is the cell inner membrane. Functionally, part of the twin-arginine translocation (Tat) system that transports large folded proteins containing a characteristic twin-arginine motif in their signal peptide across membranes. TatA could form the protein-conducting channel of the Tat system. This is Sec-independent protein translocase protein TatA from Rhodopseudomonas palustris (strain BisB18).